We begin with the raw amino-acid sequence, 286 residues long: 33 kDa chaperonin (286 aa).

Disulfide bonds link cysteine 225–cysteine 227 and cysteine 258–cysteine 261.

It belongs to the HSP33 family. Post-translationally, under oxidizing conditions two disulfide bonds are formed involving the reactive cysteines. Under reducing conditions zinc is bound to the reactive cysteines and the protein is inactive.

It localises to the cytoplasm. In terms of biological role, redox regulated molecular chaperone. Protects both thermally unfolding and oxidatively damaged proteins from irreversible aggregation. Plays an important role in the bacterial defense system toward oxidative stress. The sequence is that of 33 kDa chaperonin from Shewanella sediminis (strain HAW-EB3).